Here is an 807-residue protein sequence, read N- to C-terminus: Glycerol-3-phosphate acyltransferase (807 aa).

The short motif at 305–310 (CHRSHM) is the HXXXXD motif element.

The protein belongs to the GPAT/DAPAT family.

The protein resides in the cell inner membrane. It carries out the reaction sn-glycerol 3-phosphate + an acyl-CoA = a 1-acyl-sn-glycero-3-phosphate + CoA. It participates in phospholipid metabolism; CDP-diacylglycerol biosynthesis; CDP-diacylglycerol from sn-glycerol 3-phosphate: step 1/3. In Klebsiella pneumoniae (strain 342), this protein is Glycerol-3-phosphate acyltransferase.